Reading from the N-terminus, the 407-residue chain is MQIYLVGGAVRDSLLNIDVKDKDWVVVGSTPTHMNSLGYQSVGQDFPVFLHPRTKEEYALARTERKSGQGYKGFTCYAEADVTLEEDLLRRDLTINAIAQSDKGLLIDPYHGQEDLKNRLLRHVSNAFVEDPLRVLRVARFAARFHYLGFTIAPETMQLMKTLVSSGELSHLTPERVWQEWEKSLSSKHPNIFLSVLKECGALAVVLPEIDALFGVPQPEQWHPEIDTGMHTLMVSQQASLLSTSLPIRFAAQVHDLGKGITPESEWPSHKMHCHTGIKVIKNLCKRVRVPNEYKELALLVCEHHTNVHRASELRAQTFIKIFDKMDLWRKPERLESILLCCQADHAGRLGLELNPYPQKERMESAFNAAQHVEVKEVVAAGFKGPEIRDELTKRRIEAVKVALLIN.

ATP contacts are provided by Gly8 and Arg11. Gly8 and Arg11 together coordinate CTP. 2 residues coordinate Mg(2+): Asp21 and Asp23. Residues Arg91, Arg137, and Arg140 each contribute to the ATP site. Arg91, Arg137, and Arg140 together coordinate CTP. Positions 228–329 (TGMHTLMVSQ…IKIFDKMDLW (102 aa)) constitute an HD domain.

Belongs to the tRNA nucleotidyltransferase/poly(A) polymerase family. Bacterial CCA-adding enzyme type 1 subfamily. Monomer. Can also form homodimers and oligomers. Mg(2+) serves as cofactor. Requires Ni(2+) as cofactor.

The enzyme catalyses a tRNA precursor + 2 CTP + ATP = a tRNA with a 3' CCA end + 3 diphosphate. It carries out the reaction a tRNA with a 3' CCA end + 2 CTP + ATP = a tRNA with a 3' CCACCA end + 3 diphosphate. Catalyzes the addition and repair of the essential 3'-terminal CCA sequence in tRNAs without using a nucleic acid template. Adds these three nucleotides in the order of C, C, and A to the tRNA nucleotide-73, using CTP and ATP as substrates and producing inorganic pyrophosphate. tRNA 3'-terminal CCA addition is required both for tRNA processing and repair. Also involved in tRNA surveillance by mediating tandem CCA addition to generate a CCACCA at the 3' terminus of unstable tRNAs. While stable tRNAs receive only 3'-terminal CCA, unstable tRNAs are marked with CCACCA and rapidly degraded. The polypeptide is Multifunctional CCA protein (Aliivibrio salmonicida (strain LFI1238) (Vibrio salmonicida (strain LFI1238))).